Here is a 334-residue protein sequence, read N- to C-terminus: Thioredoxin reductase (334 aa).

FAD-binding positions include 11-14 (SGAG), 40-41 (TA), Gln-45, Asn-54, Cys-148, Asp-294, and 301-303 (RQA). A disulfide bridge links Cys-145 with Cys-148.

The protein belongs to the class-II pyridine nucleotide-disulfide oxidoreductase family. Homodimer. It depends on FAD as a cofactor.

It catalyses the reaction [thioredoxin]-dithiol + NADP(+) = [thioredoxin]-disulfide + NADPH + H(+). Functionally, component of the thioredoxin-thioredoxin reductase system which may be involved in biosynthesis of penicillins and cephalosporins and may be important in determining the thiol-disulfide redox balance. This Penicillium chrysogenum (Penicillium notatum) protein is Thioredoxin reductase (TRR1).